Consider the following 197-residue polypeptide: MLRVGVIGVQGAVSEHIEAVKRAFERLGVEGEAFWLRRPEQLNAIDAIILPGGESTTISRLMQKNGLFEPVKKLGEEGLPIMGTCAGLILLAKEVEGAVEGQRFLELLDVRVNRNAYGRQVDSFEAPLKLSFSDEPFPGVFIRAPKIVELLNDKVKPIAWHGDEVVGVEQGNIIGLAFHPELTDDARLHEYFLRKAL.

53–55 lines the L-glutamine pocket; the sequence is GES. Residue Cys-85 is the Nucleophile of the active site. L-glutamine-binding positions include Arg-114 and 142–143; that span reads IR. Residues His-179 and Glu-181 each act as charge relay system in the active site.

The protein belongs to the glutaminase PdxT/SNO family. As to quaternary structure, in the presence of PdxS, forms a dodecamer of heterodimers. Only shows activity in the heterodimer.

The catalysed reaction is aldehydo-D-ribose 5-phosphate + D-glyceraldehyde 3-phosphate + L-glutamine = pyridoxal 5'-phosphate + L-glutamate + phosphate + 3 H2O + H(+). The enzyme catalyses L-glutamine + H2O = L-glutamate + NH4(+). The protein operates within cofactor biosynthesis; pyridoxal 5'-phosphate biosynthesis. Functionally, catalyzes the hydrolysis of glutamine to glutamate and ammonia as part of the biosynthesis of pyridoxal 5'-phosphate. The resulting ammonia molecule is channeled to the active site of PdxS. The polypeptide is Pyridoxal 5'-phosphate synthase subunit PdxT (Thermococcus onnurineus (strain NA1)).